Here is a 124-residue protein sequence, read N- to C-terminus: Small ribosomal subunit protein bS6 (124 aa).

Positions 96–124 are disordered; sequence ETGPSPMMKEVQREEAKKAAAAQPAEAQA. Residues 114–124 are compositionally biased toward low complexity; it reads AAAAQPAEAQA.

The protein belongs to the bacterial ribosomal protein bS6 family.

Functionally, binds together with bS18 to 16S ribosomal RNA. In Burkholderia orbicola (strain MC0-3), this protein is Small ribosomal subunit protein bS6.